Consider the following 344-residue polypeptide: Uroporphyrinogen decarboxylase (344 aa).

Substrate-binding positions include 27–31 (RQAGR), Phe-46, Asp-77, Tyr-153, Thr-208, and His-324.

The protein belongs to the uroporphyrinogen decarboxylase family. Homodimer.

The protein localises to the cytoplasm. It catalyses the reaction uroporphyrinogen III + 4 H(+) = coproporphyrinogen III + 4 CO2. The protein operates within porphyrin-containing compound metabolism; protoporphyrin-IX biosynthesis; coproporphyrinogen-III from 5-aminolevulinate: step 4/4. Its function is as follows. Catalyzes the decarboxylation of four acetate groups of uroporphyrinogen-III to yield coproporphyrinogen-III. This chain is Uroporphyrinogen decarboxylase, found in Bradyrhizobium diazoefficiens (strain JCM 10833 / BCRC 13528 / IAM 13628 / NBRC 14792 / USDA 110).